A 276-amino-acid chain; its full sequence is Cruxhalorhodopsin-3 (276 aa).

The propeptide occupies 1–21 (MPAASTAATTLLQASQSEVLG). The Extracellular portion of the chain corresponds to 22-25 (EIQS). The helical transmembrane segment at 26–51 (NFLLNSSLWVNIALAGVVILLFVAMG) threads the bilayer. Topologically, residues 52–57 (RELESS) are cytoplasmic. A helical membrane pass occupies residues 58-81 (RAKLIWVATMLVPLVSISSYAGLA). Residues 82–105 (SGLTVGFLQMPPGHALAGQEVLSP) lie on the Extracellular side of the membrane. Residues 106-127 (WGRYLTWTFSTPMILLALGLLA) form a helical membrane-spanning segment. The Cytoplasmic segment spans residues 128–130 (DTD). The chain crosses the membrane as a helical span at residues 131-154 (MASLFTAITMDIGMCITGLAAALV). Residues 155 to 157 (TSS) are Extracellular-facing. A helical membrane pass occupies residues 158 to 180 (HLLRWVFYGISCAFFIAVLYVLL). The Cytoplasmic portion of the chain corresponds to 181–192 (VEWPADAEAAGT). A helical transmembrane segment spans residues 193–216 (SEIFGTLKLLTVVLWLGYPILWAL). Over 217–225 (GSEGVALLS) the chain is Extracellular. The chain crosses the membrane as a helical span at residues 226–254 (VGVTSWGYSGLDILAKYVFAFLLLRWVAA). Lys241 bears the N6-(retinylidene)lysine mark. At 255–276 (NEDTVTQAGMSLGSGGAAPADD) the chain is on the cytoplasmic side.

The protein belongs to the archaeal/bacterial/fungal opsin family.

It is found in the cell membrane. In terms of biological role, light-driven chloride pump. The chain is Cruxhalorhodopsin-3 (choP3) from Haloarcula vallismortis (Halobacterium vallismortis).